Consider the following 51-residue polypeptide: Large ribosomal subunit protein bL33 (51 aa).

Belongs to the bacterial ribosomal protein bL33 family.

In Vesicomyosocius okutanii subsp. Calyptogena okutanii (strain HA), this protein is Large ribosomal subunit protein bL33.